The chain runs to 344 residues: Acyl-CoA ligase clz12 (344 aa).

AMP-binding regions lie at residues 2-239 and 248-322; these read VQRS…IIKV and ELET…PSGK.

The protein belongs to the ATP-dependent AMP-binding enzyme family.

The protein operates within secondary metabolite biosynthesis. Acyl-CoA ligase; part of the gene cluster that mediates the biosynthesis of squalestatin S1 (SQS1, also known as zaragozic acid A), a heavily oxidized fungal polyketide that offers potent cholesterol lowering activity by targeting squalene synthase (SS). SQS1 is composed of a 2,8-dioxobicyclic[3.2.1]octane-3,4,5-tricarboxyclic acid core that is connected to two lipophilic polyketide arms. These initial steps feature the priming of an unusual benzoic acid starter unit onto the highly reducing polyketide synthase clz14, followed by oxaloacetate extension and product release to generate a tricarboxylic acid containing product. The phenylalanine ammonia lyase (PAL) clz10 and the acyl-CoA ligase clz12 are involved in transforming phenylalanine into benzoyl-CoA. The citrate synthase-like protein clz17 is involved in connecting the C-alpha-carbons of the hexaketide chain and oxaloacetate to afford the tricarboxylic acid unit. The potential hydrolytic enzymes, clz11 and clz13, are in close proximity to pks2 and may participate in product release. On the other side, the tetraketide arm is synthesized by a the squalestatin tetraketide synthase clz2 and enzymatically esterified to the core in the last biosynthetic step, by the acetyltransferase clz6. The biosynthesis of the tetraketide must involve 3 rounds of chain extension. After the first and second rounds methyl-transfer occurs, and in all rounds of extension the ketoreductase and dehydratase are active. The enoyl reductase and C-MeT of clz2 are not active in the final round of extension. The acetyltransferase clz6 appears to have a broad substrate selectivity for its acyl CoA substrate, allowing the in vitro synthesis of novel squalestatins. The biosynthesis of SQS1 requires several oxidative steps likely performed by oxidoreductases clz3, clz15 and clz16. Finally, in support of the identification of the cluster as being responsible for SQS1 production, the cluster contains a gene encoding a putative squalene synthase (SS) clz20, suggesting a likely mechanism for self-resistance. This is Acyl-CoA ligase clz12 from Cochliobolus lunatus (Filamentous fungus).